Reading from the N-terminus, the 175-residue chain is Universal stress protein A-like protein (175 aa).

AMP-binding residues include Ala-11, Val-12, Asn-13, Ser-26, Cys-27, Val-53, Gly-131, Arg-133, Thr-145, Val-146, and Ser-147.

It belongs to the universal stress protein A family. Homohexamer.

This is Universal stress protein A-like protein from Arabidopsis thaliana (Mouse-ear cress).